Consider the following 197-residue polypeptide: NADH-quinone oxidoreductase subunit B (197 aa).

Residues Cys63, Cys64, Cys129, and Cys159 each coordinate [4Fe-4S] cluster.

The protein belongs to the complex I 20 kDa subunit family. As to quaternary structure, NDH-1 is composed of 14 different subunits. Subunits NuoB, C, D, E, F, and G constitute the peripheral sector of the complex. The cofactor is [4Fe-4S] cluster.

Its subcellular location is the cell inner membrane. The catalysed reaction is a quinone + NADH + 5 H(+)(in) = a quinol + NAD(+) + 4 H(+)(out). Its function is as follows. NDH-1 shuttles electrons from NADH, via FMN and iron-sulfur (Fe-S) centers, to quinones in the respiratory chain. The immediate electron acceptor for the enzyme in this species is believed to be a menaquinone. Couples the redox reaction to proton translocation (for every two electrons transferred, four hydrogen ions are translocated across the cytoplasmic membrane), and thus conserves the redox energy in a proton gradient. The chain is NADH-quinone oxidoreductase subunit B from Bacteroides thetaiotaomicron (strain ATCC 29148 / DSM 2079 / JCM 5827 / CCUG 10774 / NCTC 10582 / VPI-5482 / E50).